Reading from the N-terminus, the 380-residue chain is Cytochrome b (380 aa).

4 helical membrane passes run 33-53 (FGSL…FLAM), 77-98 (WLIR…YLHI), 113-133 (WNVG…GYVL), and 178-198 (FFAF…LHLL). Heme b-binding residues include histidine 83 and histidine 97. Histidine 182 and histidine 196 together coordinate heme b. Histidine 201 contributes to the a ubiquinone binding site. The next 4 helical transmembrane spans lie at 226 to 246 (YKDL…ALFS), 288 to 308 (LGGV…PFLH), 320 to 340 (ASQF…WIGG), and 347 to 367 (FIII…VLFP).

Belongs to the cytochrome b family. The cytochrome bc1 complex contains 3 respiratory subunits (MT-CYB, CYC1 and UQCRFS1), 2 core proteins (UQCRC1 and UQCRC2) and probably 6 low-molecular weight proteins. Heme b is required as a cofactor.

Its subcellular location is the mitochondrion inner membrane. Its function is as follows. Component of the ubiquinol-cytochrome c reductase complex (complex III or cytochrome b-c1 complex) that is part of the mitochondrial respiratory chain. The b-c1 complex mediates electron transfer from ubiquinol to cytochrome c. Contributes to the generation of a proton gradient across the mitochondrial membrane that is then used for ATP synthesis. In Scomber scombrus (Atlantic mackerel), this protein is Cytochrome b (mt-cyb).